Reading from the N-terminus, the 80-residue chain is Cell division protein ZapB (80 aa).

A coiled-coil region spans residues 3–80 (FEVLEQLESK…ALLGKMDEVE (78 aa)).

Belongs to the ZapB family. Homodimer. The ends of the coiled-coil dimer bind to each other, forming polymers. Interacts with FtsZ.

Its subcellular location is the cytoplasm. Non-essential, abundant cell division factor that is required for proper Z-ring formation. It is recruited early to the divisome by direct interaction with FtsZ, stimulating Z-ring assembly and thereby promoting cell division earlier in the cell cycle. Its recruitment to the Z-ring requires functional FtsA or ZipA. The sequence is that of Cell division protein ZapB from Vibrio parahaemolyticus serotype O3:K6 (strain RIMD 2210633).